Here is a 512-residue protein sequence, read N- to C-terminus: Cytochrome P450 monooxygenase ABA1 (512 aa).

Residues 13–32 (HWLSGILAIATVYLATSYII) form a helical membrane-spanning segment. Position 458 (Cys458) interacts with heme.

This sequence belongs to the cytochrome P450 family. The cofactor is heme.

The protein resides in the membrane. The protein operates within hormone biosynthesis. Functionally, cytochrome P450 monooxygenase involved in the biosynthesis of abscisic acid (ABA), a phytohormone that acts antagonistically toward salicylic acid (SA), jasmonic acid (JA) and ethylene (ETH) signaling, to impede plant defense responses. During pathogen-host interaction, ABA plays a dual role in disease severity by increasing plant susceptibility and accelerating pathogenesis in the fungus itself. The first step of the pathway catalyzes the reaction from farnesyl diphosphate to alpha-ionylideneethane performed by the alpha-ionylideneethane synthase ABA3 via a three-step reaction mechanism involving 2 neutral intermediates, beta-farnesene and allofarnesene. The cytochrome P450 monooxygenase ABA1 might then be involved in the conversion of alpha-ionylideneethane to alpha-ionylideneacetic acid. Alpha-ionylideneacetic acid is further converted to abscisic acid in 2 steps involving the cytochrome P450 monooxygenase ABA2 and the short-chain dehydrogenase/reductase ABA4, via the intermediates 1'-deoxy-ABA or 1',4'-trans-diol-ABA, depending on the order of action of these 2 enzymes. ABA2 is responsible for the hydroxylation of carbon atom C-1' and ABA4 might be involved in the oxidation of the C-4' carbon atom. This is Cytochrome P450 monooxygenase ABA1 from Pyricularia oryzae (strain Y34) (Rice blast fungus).